We begin with the raw amino-acid sequence, 963 residues long: Iron-responsive element-binding protein 2 (963 aa).

The [4Fe-4S] cluster site is built by cysteine 512, cysteine 578, and cysteine 581.

This sequence belongs to the aconitase/IPM isomerase family. In terms of assembly, interacts with RBCK1 only in iron-rich conditions. Interacts (when associated with the 4Fe-4S) with FBXL5. Interacts with CIAO1 and CIAO2A. It depends on [4Fe-4S] cluster as a cofactor. Post-translationally, ubiquitinated and degraded by the proteasome in presence of high level of iron and oxygen. Ubiquitinated by a SCF complex containing FBXL5. Upon iron and oxygen depletion FBXL5 is degraded, preventing ubiquitination and allowing its RNA-binding activity.

The protein resides in the cytoplasm. In terms of biological role, RNA-binding protein that binds to iron-responsive elements (IRES), which are stem-loop structures found in the 5'-UTR of ferritin, and delta aminolevulinic acid synthase mRNAs, and in the 3'-UTR of transferrin receptor mRNA. Binding to the IRE element in ferritin results in the repression of its mRNA translation. Binding of the protein to the transferrin receptor mRNA inhibits the degradation of this otherwise rapidly degraded mRNA. The polypeptide is Iron-responsive element-binding protein 2 (Ireb2) (Mus musculus (Mouse)).